Consider the following 340-residue polypeptide: Peroxisomal adenine nucleotide transporter 1 (340 aa).

Solcar repeat units follow at residues 4-119, 133-218, and 236-320; these read ENAV…VRKH, FSTP…LREA, and LSPG…LTKM. 6 consecutive transmembrane segments (helical) span residues 6-26, 96-116, 139-159, 190-210, 242-262, and 293-313; these read AVIG…LDLA, GSST…YTLV, LVLG…INVV, GFWA…ITYA, FVMG…LIIA, and WKGL…LFMF.

It belongs to the mitochondrial carrier (TC 2.A.29) family.

It is found in the peroxisome membrane. In terms of biological role, adenine nucleotide transporter involved in the uniport of ATP and adenine nucleotide hetero-exchange transport between the cytosol and the peroxisomal lumen. This transport is accompanied by a proton transport from the peroxisomal lumen to the cytosol. Transport of ATP into the peroxisome is required for beta-oxidation of medium-chain fatty acids. In Eremothecium gossypii (strain ATCC 10895 / CBS 109.51 / FGSC 9923 / NRRL Y-1056) (Yeast), this protein is Peroxisomal adenine nucleotide transporter 1 (ANT1).